Reading from the N-terminus, the 877-residue chain is Phosphoenolpyruvate carboxylase (877 aa).

Active-site residues include histidine 138 and lysine 544.

This sequence belongs to the PEPCase type 1 family. Mg(2+) serves as cofactor.

It catalyses the reaction oxaloacetate + phosphate = phosphoenolpyruvate + hydrogencarbonate. Its function is as follows. Forms oxaloacetate, a four-carbon dicarboxylic acid source for the tricarboxylic acid cycle. This Vibrio parahaemolyticus serotype O3:K6 (strain RIMD 2210633) protein is Phosphoenolpyruvate carboxylase.